Reading from the N-terminus, the 397-residue chain is Formate-dependent phosphoribosylglycinamide formyltransferase (397 aa).

N(1)-(5-phospho-beta-D-ribosyl)glycinamide-binding positions include Glu21–Leu22 and Glu81. Residues Arg113, Lys154, Glu194–Val197, and Glu202 each bind ATP. The ATP-grasp domain maps to Lys118 to Leu313. Mg(2+)-binding residues include Glu272 and Glu284. N(1)-(5-phospho-beta-D-ribosyl)glycinamide-binding positions include Asp291, Lys361, and Arg368–Arg369.

This sequence belongs to the PurK/PurT family. In terms of assembly, homodimer.

The catalysed reaction is N(1)-(5-phospho-beta-D-ribosyl)glycinamide + formate + ATP = N(2)-formyl-N(1)-(5-phospho-beta-D-ribosyl)glycinamide + ADP + phosphate + H(+). Its pathway is purine metabolism; IMP biosynthesis via de novo pathway; N(2)-formyl-N(1)-(5-phospho-D-ribosyl)glycinamide from N(1)-(5-phospho-D-ribosyl)glycinamide (formate route): step 1/1. Involved in the de novo purine biosynthesis. Catalyzes the transfer of formate to 5-phospho-ribosyl-glycinamide (GAR), producing 5-phospho-ribosyl-N-formylglycinamide (FGAR). Formate is provided by PurU via hydrolysis of 10-formyl-tetrahydrofolate. The sequence is that of Formate-dependent phosphoribosylglycinamide formyltransferase from Sulfurisphaera tokodaii (strain DSM 16993 / JCM 10545 / NBRC 100140 / 7) (Sulfolobus tokodaii).